Consider the following 320-residue polypeptide: Putative HTH-type transcriptional regulatory protein VNG_2112C (320 aa).

The region spanning 132–189 (LADRREDERLSLGQLASELGVSRRTVSKYEDGMNASIEVAMRLEDLFGGELTAPVDVM) is the HTH cro/C1-type domain. The H-T-H motif DNA-binding region spans 143 to 162 (LGQLASELGVSRRTVSKYED).

The chain is Putative HTH-type transcriptional regulatory protein VNG_2112C from Halobacterium salinarum (strain ATCC 700922 / JCM 11081 / NRC-1) (Halobacterium halobium).